We begin with the raw amino-acid sequence, 230 residues long: Thymidylate kinase (230 aa).

Position 20–27 (20–27) interacts with ATP; that stretch reads GGEGAGKS.

Belongs to the thymidylate kinase family.

It catalyses the reaction dTMP + ATP = dTDP + ADP. In terms of biological role, phosphorylation of dTMP to form dTDP in both de novo and salvage pathways of dTTP synthesis. The polypeptide is Thymidylate kinase (Rhodopseudomonas palustris (strain BisB18)).